The sequence spans 145 residues: Protein SprT-like (145 aa).

The 137-residue stretch at 5-141 folds into the SprT-like domain; it reads NYVKQVSVED…CGRCMGKLRL (137 aa). H64 contacts Zn(2+). E65 is a catalytic residue. H68 contributes to the Zn(2+) binding site.

It belongs to the SprT family. It depends on Zn(2+) as a cofactor.

It is found in the cytoplasm. This is Protein SprT-like from Streptococcus sanguinis (strain SK36).